Here is a 93-residue protein sequence, read N- to C-terminus: Small ribosomal subunit protein uS19 (93 aa).

It belongs to the universal ribosomal protein uS19 family.

Protein S19 forms a complex with S13 that binds strongly to the 16S ribosomal RNA. The sequence is that of Small ribosomal subunit protein uS19 from Campylobacter jejuni subsp. jejuni serotype O:6 (strain 81116 / NCTC 11828).